The following is a 62-amino-acid chain: MAKKLAITLTRSVIGRPEDQRVTVRTLGLRKMHQTVIHNDNPAIRGMINKVAHLVKVKEIEE.

The protein belongs to the universal ribosomal protein uL30 family. In terms of assembly, part of the 50S ribosomal subunit.

The protein is Large ribosomal subunit protein uL30 of Geobacillus kaustophilus (strain HTA426).